Reading from the N-terminus, the 544-residue chain is Hydroxylamine reductase (544 aa).

4 residues coordinate [4Fe-4S] cluster: C3, C6, C15, and C21. The hybrid [4Fe-2O-2S] cluster site is built by H244, E268, C313, C400, C428, C453, E487, and K489. C400 carries the post-translational modification Cysteine persulfide.

The protein belongs to the HCP family. The cofactor is [4Fe-4S] cluster. Hybrid [4Fe-2O-2S] cluster is required as a cofactor.

It localises to the cytoplasm. It carries out the reaction A + NH4(+) + H2O = hydroxylamine + AH2 + H(+). Catalyzes the reduction of hydroxylamine to form NH(3) and H(2)O. The chain is Hydroxylamine reductase from Trichormus variabilis (strain ATCC 29413 / PCC 7937) (Anabaena variabilis).